We begin with the raw amino-acid sequence, 564 residues long: Hexose transporter HXT13 (564 aa).

Residues 1 to 52 (MSSAQSSIDSDGDVRDADIHVAPPVEKEWSDGFDDNEVINGDNVEPPKRGLI) are Cytoplasmic-facing. A helical membrane pass occupies residues 53–73 (GYLVIYLLCYPISFGGFLPGW). Over 74-109 (DSGITAGFINMDNFKMNFGSYKHSTGEYYLSNVRMG) the chain is Extracellular. A helical membrane pass occupies residues 110-130 (LLVAMFSIGCAIGGLIFARLA). The Cytoplasmic segment spans residues 131–136 (DTLGRR). A helical transmembrane segment spans residues 137–157 (LAIVIVVLVYMVGAIIQISSN). The Extracellular segment spans residues 158-167 (HKWYQYFVGK). The chain crosses the membrane as a helical span at residues 168 to 188 (IIYGLGAGGCSVLCPMLLSEI). Topologically, residues 189 to 194 (APTDLR) are cytoplasmic. A helical membrane pass occupies residues 195-215 (GGLVSLYQLNMTFGIFLGYCS). Residues 216–229 (VYGTRKYDNTAQWR) are Extracellular-facing. The chain crosses the membrane as a helical span at residues 230–250 (VPLGLCFLWALIIIIGMLLVP). Residues 251-333 (ESPRYLIECE…VQTFLQLTGE (83 aa)) are Cytoplasmic-facing. The chain crosses the membrane as a helical span at residues 334-350 (NYFFFYGTTIFKSVGLT). Topologically, residues 351–356 (DGFETS) are extracellular. A helical transmembrane segment spans residues 357–374 (IVLGTVNFFSTIIAVMVV). At 375-381 (DKIGRRK) the chain is on the cytoplasmic side. The helical transmembrane segment at 382–402 (CLLFGAAGMMACMVIFASIGV) threads the bilayer. Over 403-424 (KCLYPHGQDGPSSKGAGNAMIV) the chain is Extracellular. The chain crosses the membrane as a helical span at residues 425–445 (FTCFYIFCFATTWAPVAYIVV). Over 446–462 (AESFPSKVKSRAMSIST) the chain is Cytoplasmic. A helical transmembrane segment spans residues 463–483 (ACNWLWQFLIGFFTPFITGSI). Residue histidine 484 is a topological domain, extracellular. The chain crosses the membrane as a helical span at residues 485-505 (FYYGYVFVGCLVAMFLYVFFF). The Cytoplasmic segment spans residues 506–564 (LPETIGLSLEEIQLLYEEGIKPWKSASWVPPSRRGISSEESKTEKKDWKKFLKFSKNSD). Positions 530-551 (SASWVPPSRRGISSEESKTEKK) are disordered. The segment covering 541-551 (ISSEESKTEKK) has biased composition (basic and acidic residues).

This sequence belongs to the major facilitator superfamily. Sugar transporter (TC 2.A.1.1) family.

The protein localises to the membrane. Its function is as follows. Probable glucose transporter. This is Hexose transporter HXT13 (HXT13) from Saccharomyces cerevisiae (strain ATCC 204508 / S288c) (Baker's yeast).